The sequence spans 508 residues: Steroid 17-alpha-hydroxylase/17,20 lyase (508 aa).

Residue N202 coordinates substrate. A heme-binding site is contributed by C442.

Belongs to the cytochrome P450 family. Heme serves as cofactor.

It localises to the endoplasmic reticulum membrane. It is found in the microsome membrane. The catalysed reaction is a C21-steroid + reduced [NADPH--hemoprotein reductase] + O2 = a 17alpha-hydroxy-C21-steroid + oxidized [NADPH--hemoprotein reductase] + H2O + H(+). It catalyses the reaction progesterone + reduced [NADPH--hemoprotein reductase] + O2 = 17alpha-hydroxyprogesterone + oxidized [NADPH--hemoprotein reductase] + H2O + H(+). The enzyme catalyses pregnenolone + reduced [NADPH--hemoprotein reductase] + O2 = 17alpha-hydroxypregnenolone + oxidized [NADPH--hemoprotein reductase] + H2O + H(+). It carries out the reaction 17alpha-hydroxyprogesterone + reduced [NADPH--hemoprotein reductase] + O2 = androst-4-ene-3,17-dione + acetate + oxidized [NADPH--hemoprotein reductase] + H2O + 2 H(+). The catalysed reaction is 17alpha-hydroxyprogesterone + reduced [NADPH--hemoprotein reductase] + O2 = 16alpha,17alpha-dihydroxyprogesterone + oxidized [NADPH--hemoprotein reductase] + H2O + H(+). It catalyses the reaction 16alpha,17alpha-dihydroxyprogesterone + reduced [NADPH--hemoprotein reductase] + O2 = 6beta,16alpha,17alpha-trihydroxyprogesterone + oxidized [NADPH--hemoprotein reductase] + H2O + H(+). The enzyme catalyses 17alpha-hydroxypregnenolone + reduced [NADPH--hemoprotein reductase] + O2 = 3beta-hydroxyandrost-5-en-17-one + acetate + oxidized [NADPH--hemoprotein reductase] + H2O + 2 H(+). It carries out the reaction 16alpha,17alpha-dihydroxypregnenolone + reduced [NADPH--hemoprotein reductase] + O2 = 3beta,16alpha-dihydroxy-androst-5-en-17-one + acetate + oxidized [NADPH--hemoprotein reductase] + H2O + 2 H(+). The catalysed reaction is 3beta-hydroxyandrost-5-en-17-one + reduced [NADPH--hemoprotein reductase] + O2 = 3beta,16alpha-dihydroxy-androst-5-en-17-one + oxidized [NADPH--hemoprotein reductase] + H2O + H(+). It catalyses the reaction androst-4-ene-3,17-dione + reduced [NADPH--hemoprotein reductase] + O2 = 16alpha-hydroxyandrost-4-ene-3,17-dione + oxidized [NADPH--hemoprotein reductase] + H2O + H(+). It participates in steroid hormone biosynthesis. It functions in the pathway steroid biosynthesis; glucocorticoid biosynthesis. Regulated predominantly by intracellular cAMP levels. The 17,20-lyase activity is stimulated by cytochrome b5, which acts as an allosteric effector increasing the Vmax of the lyase activity. A cytochrome P450 monooxygenase involved in corticoid and androgen biosynthesis. Catalyzes 17-alpha hydroxylation of C21 steroids, which is common for both pathways. A second oxidative step, required only for androgen synthesis, involves an acyl-carbon cleavage. The 17-alpha hydroxy intermediates, as part of adrenal glucocorticoids biosynthesis pathway, are precursors of cortisol. Hydroxylates steroid hormones, pregnenolone and progesterone to form 17-alpha hydroxy metabolites, followed by the cleavage of the C17-C20 bond to form C19 steroids, dehydroepiandrosterone (DHEA) and androstenedione. Has 16-alpha hydroxylase activity. Catalyzes 16-alpha hydroxylation of 17-alpha hydroxy pregnenolone, followed by the cleavage of the C17-C20 bond to form 16-alpha-hydroxy DHEA. Also 16-alpha hydroxylates androgens, relevant for estriol synthesis. Mechanistically, uses molecular oxygen inserting one oxygen atom into a substrate, and reducing the second into a water molecule, with two electrons provided by NADPH via cytochrome P450 reductase (CPR; NADPH-ferrihemoprotein reductase). The polypeptide is Steroid 17-alpha-hydroxylase/17,20 lyase (CYP17A1) (Papio cynocephalus (Yellow baboon)).